The sequence spans 545 residues: Glucose-6-phosphate isomerase (545 aa).

The active-site Proton donor is the glutamate 351. Active-site residues include histidine 382 and lysine 510.

The protein belongs to the GPI family.

The protein localises to the cytoplasm. The catalysed reaction is alpha-D-glucose 6-phosphate = beta-D-fructose 6-phosphate. It participates in carbohydrate biosynthesis; gluconeogenesis. The protein operates within carbohydrate degradation; glycolysis; D-glyceraldehyde 3-phosphate and glycerone phosphate from D-glucose: step 2/4. Functionally, catalyzes the reversible isomerization of glucose-6-phosphate to fructose-6-phosphate. The polypeptide is Glucose-6-phosphate isomerase (Helicobacter acinonychis (strain Sheeba)).